The following is a 110-amino-acid chain: METLAQHRQARCSAQKIRLIADLIRGKKVPKALNILNFNNKKAAILVKKVLESALANAEHNDGLDVDQLRIKNIFVDEGSTMKRMMPRAKGRADRILKRTSHITVIVSDR.

The protein belongs to the universal ribosomal protein uL22 family. As to quaternary structure, part of the 50S ribosomal subunit.

In terms of biological role, this protein binds specifically to 23S rRNA; its binding is stimulated by other ribosomal proteins, e.g. L4, L17, and L20. It is important during the early stages of 50S assembly. It makes multiple contacts with different domains of the 23S rRNA in the assembled 50S subunit and ribosome. Functionally, the globular domain of the protein is located near the polypeptide exit tunnel on the outside of the subunit, while an extended beta-hairpin is found that lines the wall of the exit tunnel in the center of the 70S ribosome. This Buchnera aphidicola subsp. Schizaphis graminum (strain Sg) protein is Large ribosomal subunit protein uL22.